The chain runs to 317 residues: SWI/SNF-related matrix-associated actin-dependent regulator of chromatin subfamily E member 1-related (317 aa).

Residues 1 to 17 (MSHGPKQPGAAAAPAGG) are compositionally biased toward low complexity. A disordered region spans residues 1–71 (MSHGPKQPGA…RKKILPNGPK (71 aa)). Lysine 31 participates in a covalent cross-link: Glycyl lysine isopeptide (Lys-Gly) (interchain with G-Cter in SUMO2). The segment covering 31-52 (KQERGEGPRAGEKGSHEEEPVK) has biased composition (basic and acidic residues). A compositionally biased stretch (basic residues) spans 53–65 (KRGWPKGKKRKKI). Residues 70-138 (PKAPVTGYVR…QYMKELRAYQ (69 aa)) constitute a DNA-binding region (HMG box). Serine 160 carries the post-translational modification Phosphoserine. A coiled-coil region spans residues 190–257 (EEFLDQNKAR…LQQQLQAVRQ (68 aa)).

Component of a BHC histone deacetylase complex that contains HDAC1, HDAC2, HMG20B/BRAF35, KDM1A, RCOR1/CoREST and PHF21A/BHC80. The BHC complex may also contain ZMYM2, ZNF217, ZMYM3, GSE1 and GTF2I. Interacts with the BRCA2 tumor suppressor protein. Interacts with DTNB. As to expression, ubiquitously expressed in adult tissues.

The protein localises to the nucleus. It is found in the chromosome. In terms of biological role, required for correct progression through G2 phase of the cell cycle and entry into mitosis. Required for RCOR1/CoREST mediated repression of neuronal specific gene promoters. In Homo sapiens (Human), this protein is SWI/SNF-related matrix-associated actin-dependent regulator of chromatin subfamily E member 1-related (HMG20B).